The following is a 342-amino-acid chain: MSRVLVVGAGLTGSLCAALLRKEITAPLYLGLWDKGGDIGGRMITASSPHNPRCTADLGAQYITCSPHYVKEHQNFYEELLAHGILKPLTSPIEGMKGKEGDCNFVAPQGFSSVIKYYLKKSGAEVSLKHCVTQIHLKDNKWEVSTDTGSAEQFDLVILTMPAPQILELQGDIVNLISERQREQLKSVSYSSRYALGLFYEVGMKIGVPWSCRYLSSHPCICFISIDNKKRNIESSECGPSVVIQTTVPFGVQHLEASEADVQKLMIQQLETILPGLPQPVATICHKWTYSQVTSSVSDRPGQMTLHLKPFLVCGGDGFTHSNFNGCISSALSVMKVLKRYI.

The N-terminal stretch at 1–17 (MSRVLVVGAGLTGSLCA) is a signal peptide. Residues Thr12, Arg42, and 61 to 62 (QY) contribute to the FAD site.

The protein belongs to the renalase family. It depends on FAD as a cofactor. Expressed predominantly in kidney and testis with lower levels in liver, heart and embryo and weak expression in brain and skeletal muscle.

The protein resides in the secreted. The enzyme catalyses 1,2-dihydro-beta-NAD + O2 + H(+) = H2O2 + NAD(+). It carries out the reaction 1,2-dihydro-beta-NADP + O2 + H(+) = H2O2 + NADP(+). It catalyses the reaction 1,6-dihydro-beta-NADP + O2 + H(+) = H2O2 + NADP(+). The catalysed reaction is 1,6-dihydro-beta-NAD + O2 + H(+) = H2O2 + NAD(+). Catalyzes the oxidation of the less abundant 1,2-dihydro-beta-NAD(P) and 1,6-dihydro-beta-NAD(P) to form beta-NAD(P)(+). The enzyme hormone is secreted by the kidney, and circulates in blood and modulates cardiac function and systemic blood pressure. Lowers blood pressure in vivo by decreasing cardiac contractility and heart rate and preventing a compensatory increase in peripheral vascular tone, suggesting a causal link to the increased plasma catecholamine and heightened cardiovascular risk. High concentrations of catecholamines activate plasma renalase and promotes its secretion and synthesis. This Mus musculus (Mouse) protein is Renalase.